Here is a 726-residue protein sequence, read N- to C-terminus: Probable dipeptidyl-peptidase 5 (726 aa).

A signal peptide spans 1 to 19; sequence MGALQWLSITAAAASAVSA. N-linked (GlcNAc...) asparagine glycans are attached at residues Asn-97, Asn-153, Asn-259, Asn-398, Asn-453, and Asn-529. Ser-564 functions as the Charge relay system in the catalytic mechanism. The N-linked (GlcNAc...) asparagine glycan is linked to Asn-611. Residues Asp-647 and His-679 each act as charge relay system in the active site.

It belongs to the peptidase S9C family.

It localises to the secreted. Functionally, extracellular dipeptidyl-peptidase which removes N-terminal dipeptides sequentially from polypeptides having unsubstituted N-termini. The chain is Probable dipeptidyl-peptidase 5 (dpp5) from Aspergillus niger.